A 608-amino-acid polypeptide reads, in one-letter code: Mitogen-activated protein kinase kinase kinase 1 (608 aa).

Residues 1–13 are compositionally biased toward basic residues; that stretch reads MDRILARMKKSTG. Residues 1–20 form a disordered region; it reads MDRILARMKKSTGRRGGDKN. The segment at 1 to 325 is regulatory region; the sequence is MDRILARMKK…VSNTSPIYPD (325 aa). Residue Ser62 is modified to Phosphoserine. The segment at 192-234 is binding with MPK4; the sequence is MERTPTIVKSKGYLVPNNVVAVGVGVGGGIKGLRPPVLKPPPA. Disordered stretches follow at residues 228–247 and 256–287; these read VLKPPPAMKRPPIDHRGSSW and SETVKRPSSSSSSSEDGCDEEEGKEEEAEAEE. Residues 271–287 show a composition bias toward acidic residues; that stretch reads DGCDEEEGKEEEAEAEE. Residues 333–587 form the Protein kinase domain; the sequence is WQKGQLLGRG…AAELLNHPFV (255 aa). Residues 339 to 347 and Lys361 each bind ATP; that span reads LGRGSFGSV. The Proton acceptor role is filled by Asp456. At Ser603 the chain carries Phosphoserine.

This sequence belongs to the protein kinase superfamily. STE Ser/Thr protein kinase family. MAP kinase kinase kinase subfamily. In terms of assembly, interacts with MKK1, MMK2 and MPK4. May form a ternary complex composed of MEKK1 and MKK1/MKK2 and MPK4. Interacts with RACK1A, RACK1B and RACK1C. Binds to CRLK1. Post-translationally, phosphorylated by CRLK1 in response to cold.

It is found in the cell membrane. Its subcellular location is the endosome. It catalyses the reaction L-seryl-[protein] + ATP = O-phospho-L-seryl-[protein] + ADP + H(+). The catalysed reaction is L-threonyl-[protein] + ATP = O-phospho-L-threonyl-[protein] + ADP + H(+). With respect to regulation, activated by cold via CRLK1-mediated phosphorylation and leading to elevated kinase activity towards MKK2. In terms of biological role, the MEKK1, MKK1/MKK2 and MPK4 function in a signaling pathway that modulates the expression of genes responding to biotic and abiotic stresses and also plays an important role in pathogen defense by negatively regulating innate immunity. Involved in the innate immune MAP kinase signaling cascade (MEKK1, MKK4/MKK5 and MPK3/MPK6) downstream of bacterial flagellin receptor FLS2. May be involved in the cold and salinity stress-mediated MAP kinase signaling cascade (MEKK1, MKK1/MKK2 and MPK4/MPK6). Activates by phosphorylation the downstream MKK2, MKK4 and MKK5 in a calcium-dependent manner. In Arabidopsis thaliana (Mouse-ear cress), this protein is Mitogen-activated protein kinase kinase kinase 1 (MEKK1).